Consider the following 279-residue polypeptide: Undecaprenyl-diphosphatase (279 aa).

A run of 8 helical transmembrane segments spans residues 1-21 (MVLE…LPIS), 39-59 (GRFF…LYFF), 96-116 (LLLV…VRFV), 128-148 (FTMG…DALF), 155-175 (IFQI…FAII), 201-221 (FSFL…LVAG), 231-251 (YSLI…SALL), and 259-279 (FVLF…VSFF).

Belongs to the UppP family.

The protein resides in the cell membrane. It catalyses the reaction di-trans,octa-cis-undecaprenyl diphosphate + H2O = di-trans,octa-cis-undecaprenyl phosphate + phosphate + H(+). In terms of biological role, catalyzes the dephosphorylation of undecaprenyl diphosphate (UPP). Confers resistance to bacitracin. In Tropheryma whipplei (strain TW08/27) (Whipple's bacillus), this protein is Undecaprenyl-diphosphatase.